The primary structure comprises 304 residues: Acetyl-coenzyme A carboxylase carboxyl transferase subunit beta (304 aa).

The CoA carboxyltransferase N-terminal domain maps to 23–292 (VWTKCDSCGQ…PNPDAPREGV (270 aa)). 4 residues coordinate Zn(2+): Cys27, Cys30, Cys46, and Cys49. Residues 27 to 49 (CDSCGQVLYRAELERNLEVCPKC) form a C4-type zinc finger. The tract at residues 284 to 304 (NPDAPREGVVVPPAPDQESEV) is disordered.

Belongs to the AccD/PCCB family. In terms of assembly, acetyl-CoA carboxylase is a heterohexamer composed of biotin carboxyl carrier protein (AccB), biotin carboxylase (AccC) and two subunits each of ACCase subunit alpha (AccA) and ACCase subunit beta (AccD). Zn(2+) serves as cofactor.

It is found in the cytoplasm. It catalyses the reaction N(6)-carboxybiotinyl-L-lysyl-[protein] + acetyl-CoA = N(6)-biotinyl-L-lysyl-[protein] + malonyl-CoA. Its pathway is lipid metabolism; malonyl-CoA biosynthesis; malonyl-CoA from acetyl-CoA: step 1/1. Functionally, component of the acetyl coenzyme A carboxylase (ACC) complex. Biotin carboxylase (BC) catalyzes the carboxylation of biotin on its carrier protein (BCCP) and then the CO(2) group is transferred by the transcarboxylase to acetyl-CoA to form malonyl-CoA. This Salmonella paratyphi A (strain ATCC 9150 / SARB42) protein is Acetyl-coenzyme A carboxylase carboxyl transferase subunit beta.